The primary structure comprises 747 residues: MADEAALALQPGGSPSAAGADREAASSPAGEPLRKRPRRDGPGLERSPGEPGGAAPEREVPAAARGCPGAAAAALWREAEAEAAAAGGEQEAQATAAAGEGDNGPGLQGPSREPPLADNLYDEDDDDEGEEEEEAAAAAIGYRDNLLFGDEIITNGFHSCESDEEDRASHASSSDWTPRPRIGPYTFVQQHLMIGTDPRTILKDLLPETIPPPELDDMTLWQIVINILSEPPKRKKRKDINTIEDAVKLLQECKKIIVLTGAGVSVSCGIPDFRSRDGIYARLAVDFPDLPDPQAMFDIEYFRKDPRPFFKFAKEIYPGQFQPSLCHKFIALSDKEGKLLRNYTQNIDTLEQVAGIQRIIQCHGSFATASCLICKYKVDCEAVRGDIFNQVVPRCPRCPADEPLAIMKPEIVFFGENLPEQFHRAMKYDKDEVDLLIVIGSSLKVRPVALIPSSIPHEVPQILINREPLPHLHFDVELLGDCDVIINELCHRLGGEYAKLCCNPVKLSEITEKPPRTQKELAYLSELPPTPLHVSEDSSSPERTSPPDSSVIVTLLDQAAKSNDDLDVSESKGCMEEKPQEVQTSRNVESIAEQMENPDLKNVGSSTGEKNERTSVAGTVRKCWPNRVAKEQISRRLDGNQYLFLPPNRYIFHGAEVYSDSEDDVLSSSSCGSNSDSGTCQSPSLEEPMEDESEIEEFYNGLEDEPDVPERAGGAGFGTDGDDQEAINEAISVKQEVTDMNYPSNKS.

Residues 1 to 135 (MADEAALALQ…DDEGEEEEEA (135 aa)) form a disordered region. N-acetylalanine is present on Ala-2. The interval 2 to 139 (ADEAALALQP…EEEEEAAAAA (138 aa)) is interaction with CLOCK. An interaction with H1-4 region spans residues 2-268 (ADEAALALQP…LTGAGVSVSC (267 aa)). A phosphoserine mark is found at Ser-14 and Ser-26. Ser-27 is modified (phosphoserine; by MAPK8). The short motif at 32–39 (PLRKRPRR) is the Nuclear localization signal element. A Phosphoserine; by MAPK8 modification is found at Ser-47. Residues 61–100 (PAAARGCPGAAAAALWREAEAEAAAAGGEQEAQATAAAGE) show a composition bias toward low complexity. Over residues 120–135 (LYDEDDDDEGEEEEEA) the composition is skewed to acidic residues. The Nuclear export signal signature appears at 138 to 145 (AAIGYRDN). Residues 143-541 (RDNLLFGDEI…LHVSEDSSSP (399 aa)) are interaction with CCAR2. Phosphoserine is present on residues Ser-159, Ser-162, Ser-172, and Ser-173. A Nuclear localization signal motif is present at residues 223–230 (IVINILSE). One can recognise a Deacetylase sirtuin-type domain in the interval 236–496 (KRKDINTIED…NELCHRLGGE (261 aa)). Lys-238 bears the N6-acetyllysine mark. The segment at 256–259 (IIVL) is required for interaction with the sumoylated form of CCAR2. Residues 261–280 (GAGV…DGIY) and 345–348 (QNID) contribute to the NAD(+) site. Catalysis depends on His-363, which acts as the Proton acceptor. Zn(2+) is bound by residues Cys-371 and Cys-374. An N6-acetyllysine modification is found at Lys-377. Cys-395 and Cys-398 together coordinate Zn(2+). S-nitrosocysteine is present on residues Cys-395 and Cys-398. The Nuclear export signal signature appears at 425–431 (AMKYDKD). N6-acetyllysine is present on Lys-430. Residues 440–442 (GSS), 465–467 (NRE), and Cys-482 each bind NAD(+). Lys-513 carries the N6-acetyllysine modification. Disordered stretches follow at residues 523–549 (YLSE…PPDS) and 562–587 (SNDD…TSRN). Position 530 is a phosphothreonine; by DYRK1A, DYRK3 and MAPK8 (Thr-530). Ser-535 bears the Phosphoserine mark. Positions 537–549 (DSSSPERTSPPDS) are enriched in polar residues. Residues 538–540 (SSS) form a phosphorylated at one of three serine residues region. At Thr-544 the chain carries Phosphothreonine. Residue Ser-545 is modified to Phosphoserine. Residues 569 to 580 (SESKGCMEEKPQ) are compositionally biased toward basic and acidic residues. Lys-610 carries the N6-acetyllysine modification. Residues Ser-659 and Ser-661 each carry the phosphoserine; by CaMK2 modification. Positions 663–726 (DDVLSSSSCG…FGTDGDDQEA (64 aa)) are disordered. Low complexity predominate over residues 666 to 677 (LSSSSCGSNSDS). The segment covering 687–707 (EPMEDESEIEEFYNGLEDEPD) has biased composition (acidic residues). A Phosphothreonine modification is found at Thr-719. Ser-747 carries the phosphoserine modification.

Belongs to the sirtuin family. Class I subfamily. Interacts with XBP1 isoform 2. Found in a complex with PCAF and MYOD1. Interacts with FOXO1; the interaction deacetylates FOXO1, resulting in its nuclear retention and promotion of its transcriptional activity Component of the eNoSC complex, composed of SIRT1, SUV39H1 and RRP8. Interacts with HES1, HEY2 and PML. Interacts with RPS19BP1/AROS. Interacts with CCAR2 (via N-terminus); the interaction disrupts the interaction between SIRT1 and p53/TP53. Interacts with SETD7; the interaction induces the dissociation of SIRT1 from p53/TP53 and increases p53/TP53 activity. Interacts with MYCN, NR1I2, CREBZF, TSC2, TLE1, FOS, JUN, NR0B2, PPARG, NCOR, IRS1, IRS2 and NMNAT1. Interacts with HNF1A; the interaction occurs under nutrient restriction. Interacts with SUZ12; the interaction mediates the association with the PRC4 histone methylation complex which is specific as an association with PCR2 and PCR3 complex variants is not found. Interacts with BCL6; leads to a epigenetic repression of specific target genes. Interacts with CLOCK, BMAL1 and PER2. Interacts with PPARA; the interaction seems to be modulated by NAD(+) levels. Interacts with NR1H3 and this interaction is inhibited in the presence of CCAR2. Interacts with CHEK2. Interacts with p53/TP53. Exhibits a preferential interaction with sumoylated CCAR2 over its unmodified form. Interacts with PACS2. Interacts with SIRT7. Interacts with PUS7. Interacts with TULP3. Interacts with MORN3; the interaction enhances the ubiquitination of p53/TP53. In terms of assembly, (Microbial infection) Interacts with HIV-1 Tat. The cofactor is Zn(2+). In terms of processing, methylated on multiple lysine residues; methylation is enhanced after DNA damage and is dispensable for deacetylase activity toward p53/TP53. Post-translationally, phosphorylated. Phosphorylated by STK4/MST1, resulting in inhibition of SIRT1-mediated p53/TP53 deacetylation. Phosphorylation by MAPK8/JNK1 at Ser-27, Ser-47, and Thr-530 leads to increased nuclear localization and enzymatic activity. Phosphorylation at Thr-530 by DYRK1A and DYRK3 activates deacetylase activity and promotes cell survival. Phosphorylation by mammalian target of rapamycin complex 1 (mTORC1) at Ser-47 inhibits deacetylation activity. Phosphorylated by CaMK2, leading to increased p53/TP53 and NF-kappa-B p65/RELA deacetylation activity. Phosphorylation at Ser-27 implicating MAPK9 is linked to protein stability. There is some ambiguity for some phosphosites: Ser-159/Ser-162 and Thr-544/Ser-545. Proteolytically cleaved by cathepsin B upon TNF-alpha treatment to yield catalytic inactive but stable SirtT1 75 kDa fragment (75SirT1). In terms of processing, S-nitrosylated by GAPDH, leading to inhibit the NAD-dependent protein deacetylase activity. Post-translationally, acetylated at various Lys residues. Deacetylated via an autocatalytic mechanism. Autodeacetylation at Lys-238 promotes its protein deacetylase activity. Ubiquitinated; leading to degradation. Deubiquitinated by USP22; leading to stabilization. Widely expressed.

It is found in the nucleus. Its subcellular location is the PML body. It localises to the cytoplasm. The protein localises to the mitochondrion. The enzyme catalyses N(6)-acetyl-L-lysyl-[protein] + NAD(+) + H2O = 2''-O-acetyl-ADP-D-ribose + nicotinamide + L-lysyl-[protein]. It carries out the reaction N(6)-propanoyl-L-lysyl-[protein] + NAD(+) + H2O = 3''-O-propanoyl-ADP-D-ribose + nicotinamide + L-lysyl-[protein]. The catalysed reaction is N(6)-(2E)-butenoyl-L-lysyl-[protein] + NAD(+) + H2O = 2''-O-(2E)-but-2-enoyl-ADP-D-ribose + nicotinamide + L-lysyl-[protein]. It catalyses the reaction N(6)-[(S)-lactoyl]-L-lysyl-[protein] + NAD(+) + H2O = 2''-O-(S)-lactoyl-ADP-D-ribose + nicotinamide + L-lysyl-[protein]. Inhibited by nicotinamide. Activated by resveratrol (3,5,4'-trihydroxy-trans-stilbene), butein (3,4,2',4'-tetrahydroxychalcone), piceatannol (3,5,3',4'-tetrahydroxy-trans-stilbene), Isoliquiritigenin (4,2',4'-trihydroxychalcone), fisetin (3,7,3',4'-tetrahydroxyflavone) and quercetin (3,5,7,3',4'-pentahydroxyflavone). MAPK8/JNK1 and RPS19BP1/AROS act as positive regulators of deacetylation activity. Negatively regulated by CCAR2. In terms of biological role, NAD-dependent protein deacetylase that links transcriptional regulation directly to intracellular energetics and participates in the coordination of several separated cellular functions such as cell cycle, response to DNA damage, metabolism, apoptosis and autophagy. Can modulate chromatin function through deacetylation of histones and can promote alterations in the methylation of histones and DNA, leading to transcriptional repression. Deacetylates a broad range of transcription factors and coregulators, thereby regulating target gene expression positively and negatively. Serves as a sensor of the cytosolic ratio of NAD(+)/NADH which is altered by glucose deprivation and metabolic changes associated with caloric restriction. Is essential in skeletal muscle cell differentiation and in response to low nutrients mediates the inhibitory effect on skeletal myoblast differentiation which also involves 5'-AMP-activated protein kinase (AMPK) and nicotinamide phosphoribosyltransferase (NAMPT). Component of the eNoSC (energy-dependent nucleolar silencing) complex, a complex that mediates silencing of rDNA in response to intracellular energy status and acts by recruiting histone-modifying enzymes. The eNoSC complex is able to sense the energy status of cell: upon glucose starvation, elevation of NAD(+)/NADP(+) ratio activates SIRT1, leading to histone H3 deacetylation followed by dimethylation of H3 at 'Lys-9' (H3K9me2) by SUV39H1 and the formation of silent chromatin in the rDNA locus. Deacetylates 'Lys-266' of SUV39H1, leading to its activation. Inhibits skeletal muscle differentiation by deacetylating PCAF and MYOD1. Deacetylates H2A and 'Lys-26' of H1-4. Deacetylates 'Lys-16' of histone H4 (in vitro). Involved in NR0B2/SHP corepression function through chromatin remodeling: Recruited to LRH1 target gene promoters by NR0B2/SHP thereby stimulating histone H3 and H4 deacetylation leading to transcriptional repression. Proposed to contribute to genomic integrity via positive regulation of telomere length; however, reports on localization to pericentromeric heterochromatin are conflicting. Proposed to play a role in constitutive heterochromatin (CH) formation and/or maintenance through regulation of the available pool of nuclear SUV39H1. Upon oxidative/metabolic stress decreases SUV39H1 degradation by inhibiting SUV39H1 polyubiquitination by MDM2. This increase in SUV39H1 levels enhances SUV39H1 turnover in CH, which in turn seems to accelerate renewal of the heterochromatin which correlates with greater genomic integrity during stress response. Deacetylates 'Lys-382' of p53/TP53 and impairs its ability to induce transcription-dependent proapoptotic program and modulate cell senescence. Deacetylates TAF1B and thereby represses rDNA transcription by the RNA polymerase I. Deacetylates MYC, promotes the association of MYC with MAX and decreases MYC stability leading to compromised transformational capability. Deacetylates FOXO3 in response to oxidative stress thereby increasing its ability to induce cell cycle arrest and resistance to oxidative stress but inhibiting FOXO3-mediated induction of apoptosis transcriptional activity; also leading to FOXO3 ubiquitination and protesomal degradation. Appears to have a similar effect on MLLT7/FOXO4 in regulation of transcriptional activity and apoptosis. Deacetylates DNMT1; thereby impairs DNMT1 methyltransferase-independent transcription repressor activity, modulates DNMT1 cell cycle regulatory function and DNMT1-mediated gene silencing. Deacetylates RELA/NF-kappa-B p65 thereby inhibiting its transactivating potential and augments apoptosis in response to TNF-alpha. Deacetylates HIF1A, KAT5/TIP60, RB1 and HIC1. Deacetylates FOXO1 resulting in its nuclear retention and enhancement of its transcriptional activity leading to increased gluconeogenesis in liver. Inhibits E2F1 transcriptional activity and apoptotic function, possibly by deacetylation. Involved in HES1- and HEY2-mediated transcriptional repression. In cooperation with MYCN seems to be involved in transcriptional repression of DUSP6/MAPK3 leading to MYCN stabilization by phosphorylation at 'Ser-62'. Deacetylates MEF2D. Required for antagonist-mediated transcription suppression of AR-dependent genes which may be linked to local deacetylation of histone H3. Represses HNF1A-mediated transcription. Required for the repression of ESRRG by CREBZF. Deacetylates NR1H3 and NR1H2 and deacetylation of NR1H3 at 'Lys-434' positively regulates transcription of NR1H3:RXR target genes, promotes NR1H3 proteasomal degradation and results in cholesterol efflux; a promoter clearing mechanism after reach round of transcription is proposed. Involved in lipid metabolism: deacetylates LPIN1, thereby inhibiting diacylglycerol synthesis. Implicated in regulation of adipogenesis and fat mobilization in white adipocytes by repression of PPARG which probably involves association with NCOR1 and SMRT/NCOR2. Deacetylates p300/EP300 and PRMT1. Deacetylates ACSS2 leading to its activation, and HMGCS1 deacetylation. Involved in liver and muscle metabolism. Through deacetylation and activation of PPARGC1A is required to activate fatty acid oxidation in skeletal muscle under low-glucose conditions and is involved in glucose homeostasis. Involved in regulation of PPARA and fatty acid beta-oxidation in liver. Involved in positive regulation of insulin secretion in pancreatic beta cells in response to glucose; the function seems to imply transcriptional repression of UCP2. Proposed to deacetylate IRS2 thereby facilitating its insulin-induced tyrosine phosphorylation. Deacetylates SREBF1 isoform SREBP-1C thereby decreasing its stability and transactivation in lipogenic gene expression. Involved in DNA damage response by repressing genes which are involved in DNA repair, such as XPC and TP73, deacetylating XRCC6/Ku70, and facilitating recruitment of additional factors to sites of damaged DNA, such as SIRT1-deacetylated NBN can recruit ATM to initiate DNA repair and SIRT1-deacetylated XPA interacts with RPA2. Also involved in DNA repair of DNA double-strand breaks by homologous recombination and specifically single-strand annealing independently of XRCC6/Ku70 and NBN. Promotes DNA double-strand breaks by mediating deacetylation of SIRT6. Transcriptional suppression of XPC probably involves an E2F4:RBL2 suppressor complex and protein kinase B (AKT) signaling. Transcriptional suppression of TP73 probably involves E2F4 and PCAF. Deacetylates WRN thereby regulating its helicase and exonuclease activities and regulates WRN nuclear translocation in response to DNA damage. Deacetylates APEX1 at 'Lys-6' and 'Lys-7' and stimulates cellular AP endonuclease activity by promoting the association of APEX1 to XRCC1. Catalyzes deacetylation of ERCC4/XPF, thereby impairing interaction with ERCC1 and nucleotide excision repair (NER). Increases p53/TP53-mediated transcription-independent apoptosis by blocking nuclear translocation of cytoplasmic p53/TP53 and probably redirecting it to mitochondria. Deacetylates XRCC6/Ku70 at 'Lys-539' and 'Lys-542' causing it to sequester BAX away from mitochondria thereby inhibiting stress-induced apoptosis. Is involved in autophagy, presumably by deacetylating ATG5, ATG7 and MAP1LC3B/ATG8. Deacetylates AKT1 which leads to enhanced binding of AKT1 and PDK1 to PIP3 and promotes their activation. Proposed to play role in regulation of STK11/LBK1-dependent AMPK signaling pathways implicated in cellular senescence which seems to involve the regulation of the acetylation status of STK11/LBK1. Can deacetylate STK11/LBK1 and thereby increase its activity, cytoplasmic localization and association with STRAD; however, the relevance of such activity in normal cells is unclear. In endothelial cells is shown to inhibit STK11/LBK1 activity and to promote its degradation. Deacetylates SMAD7 at 'Lys-64' and 'Lys-70' thereby promoting its degradation. Deacetylates CIITA and augments its MHC class II transactivation and contributes to its stability. Deacetylates MECOM/EVI1. Deacetylates PML at 'Lys-487' and this deacetylation promotes PML control of PER2 nuclear localization. During the neurogenic transition, represses selective NOTCH1-target genes through histone deacetylation in a BCL6-dependent manner and leading to neuronal differentiation. Regulates the circadian expression of several core clock genes, including BMAL1, RORC, PER2 and CRY1 and plays a critical role in maintaining a controlled rhythmicity in histone acetylation, thereby contributing to circadian chromatin remodeling. Deacetylates BMAL1 and histones at the circadian gene promoters in order to facilitate repression by inhibitory components of the circadian oscillator. Deacetylates PER2, facilitating its ubiquitination and degradation by the proteasome. Protects cardiomyocytes against palmitate-induced apoptosis. Deacetylates XBP1 isoform 2; deacetylation decreases protein stability of XBP1 isoform 2 and inhibits its transcriptional activity. Deacetylates PCK1 and directs its activity toward phosphoenolpyruvate production promoting gluconeogenesis. Involved in the CCAR2-mediated regulation of PCK1 and NR1D1. Deacetylates CTNB1 at 'Lys-49'. In POMC (pro-opiomelanocortin) neurons, required for leptin-induced activation of PI3K signaling. Deacetylates SOX9; promoting SOX9 nuclear localization and transactivation activity. Involved in the regulation of centrosome duplication: deacetylates CENATAC in G1 phase, allowing for SASS6 accumulation on the centrosome and subsequent procentriole assembly. Deacetylates NDC80/HEC1. In addition to protein deacetylase activity, also acts as a protein-lysine deacylase by mediating protein delactylation, depropionylation and decrotonylation. Mediates depropionylation of Osterix (SP7). Catalyzes decrotonylation of histones; it however does not represent a major histone decrotonylase. Mediates protein delactylation of TEAD1 and YAP1. Deacetylates 'Lys-382' of p53/TP53, however with lower activity than isoform 1. In combination, the two isoforms exert an additive effect. Isoform 2 regulates p53/TP53 expression and cellular stress response and is in turn repressed by p53/TP53 presenting a SIRT1 isoform-dependent auto-regulatory loop. Its function is as follows. Catalytically inactive 75SirT1 may be involved in regulation of apoptosis. May be involved in protecting chondrocytes from apoptotic death by associating with cytochrome C and interfering with apoptosome assembly. Functionally, (Microbial infection) In case of HIV-1 infection, interacts with and deacetylates the viral Tat protein. The viral Tat protein inhibits SIRT1 deacetylation activity toward RELA/NF-kappa-B p65, thereby potentiates its transcriptional activity and SIRT1 is proposed to contribute to T-cell hyperactivation during infection. This Homo sapiens (Human) protein is NAD-dependent protein deacetylase sirtuin-1.